A 317-amino-acid polypeptide reads, in one-letter code: Universal stress protein MT2052 (317 aa).

Residues glycine 13, 128-134 (GYRGQGA), 142-143 (SV), glycine 175, aspartate 208, 277-283 (GSHGRGG), and 291-293 (SVS) contribute to the ATP site.

Belongs to the universal stress protein A family.

The polypeptide is Universal stress protein MT2052 (Mycobacterium tuberculosis (strain CDC 1551 / Oshkosh)).